Here is a 204-residue protein sequence, read N- to C-terminus: Leucyl/phenylalanyl-tRNA--protein transferase (204 aa).

This sequence belongs to the L/F-transferase family.

Its subcellular location is the cytoplasm. It carries out the reaction N-terminal L-lysyl-[protein] + L-leucyl-tRNA(Leu) = N-terminal L-leucyl-L-lysyl-[protein] + tRNA(Leu) + H(+). It catalyses the reaction N-terminal L-arginyl-[protein] + L-leucyl-tRNA(Leu) = N-terminal L-leucyl-L-arginyl-[protein] + tRNA(Leu) + H(+). The catalysed reaction is L-phenylalanyl-tRNA(Phe) + an N-terminal L-alpha-aminoacyl-[protein] = an N-terminal L-phenylalanyl-L-alpha-aminoacyl-[protein] + tRNA(Phe). Functions in the N-end rule pathway of protein degradation where it conjugates Leu, Phe and, less efficiently, Met from aminoacyl-tRNAs to the N-termini of proteins containing an N-terminal arginine or lysine. This is Leucyl/phenylalanyl-tRNA--protein transferase from Rhizobium johnstonii (strain DSM 114642 / LMG 32736 / 3841) (Rhizobium leguminosarum bv. viciae).